A 360-amino-acid polypeptide reads, in one-letter code: Phospho-N-acetylmuramoyl-pentapeptide-transferase (360 aa).

Transmembrane regions (helical) follow at residues 25–45 (RGILGVLTALALSLWLGPWMI), 73–93 (TMGGALILTAIAVSTLLWADL), 97–117 (YVWVVLAVTLLFGAIGWVDDY), 132–152 (WKYFWQSVFGLAAAIFLYMTA), 168–188 (VSIPLGIGFVVLTYFVIVGSS), 199–219 (GLAILPTVMVAGALAVFCYLS), 236–256 (AGELIVFCAALVGAGLGFLWF), 263–283 (VFMGDVGALALGAALGTIAVI), 288–308 (VVLFIMGGVFVMETLSVIIQV), and 338–358 (VIVRFWIITVILVLIGLATLK).

Belongs to the glycosyltransferase 4 family. MraY subfamily. Mg(2+) is required as a cofactor.

The protein localises to the cell inner membrane. The enzyme catalyses UDP-N-acetyl-alpha-D-muramoyl-L-alanyl-gamma-D-glutamyl-meso-2,6-diaminopimeloyl-D-alanyl-D-alanine + di-trans,octa-cis-undecaprenyl phosphate = di-trans,octa-cis-undecaprenyl diphospho-N-acetyl-alpha-D-muramoyl-L-alanyl-D-glutamyl-meso-2,6-diaminopimeloyl-D-alanyl-D-alanine + UMP. It functions in the pathway cell wall biogenesis; peptidoglycan biosynthesis. Its function is as follows. Catalyzes the initial step of the lipid cycle reactions in the biosynthesis of the cell wall peptidoglycan: transfers peptidoglycan precursor phospho-MurNAc-pentapeptide from UDP-MurNAc-pentapeptide onto the lipid carrier undecaprenyl phosphate, yielding undecaprenyl-pyrophosphoryl-MurNAc-pentapeptide, known as lipid I. The protein is Phospho-N-acetylmuramoyl-pentapeptide-transferase of Ectopseudomonas mendocina (strain ymp) (Pseudomonas mendocina).